The primary structure comprises 340 residues: GTP 3',8-cyclase (340 aa).

Residues 8-227 (KLGRPIRDLR…TMIEQHFEID (220 aa)) form the Radical SAM core domain. Residue Arg-17 participates in GTP binding. [4Fe-4S] cluster contacts are provided by Cys-24 and Cys-28. Position 30 (Tyr-30) interacts with S-adenosyl-L-methionine. Cys-31 is a [4Fe-4S] cluster binding site. Arg-71 is a GTP binding site. Residue Gly-75 participates in S-adenosyl-L-methionine binding. Residue Thr-102 participates in GTP binding. Position 126 (Ser-126) interacts with S-adenosyl-L-methionine. Lys-163 lines the GTP pocket. An S-adenosyl-L-methionine-binding site is contributed by Met-197. Residues Cys-261 and Cys-264 each contribute to the [4Fe-4S] cluster site. 266-268 (RAR) lines the GTP pocket. Cys-278 contributes to the [4Fe-4S] cluster binding site.

It belongs to the radical SAM superfamily. MoaA family. In terms of assembly, monomer and homodimer. [4Fe-4S] cluster is required as a cofactor.

It catalyses the reaction GTP + AH2 + S-adenosyl-L-methionine = (8S)-3',8-cyclo-7,8-dihydroguanosine 5'-triphosphate + 5'-deoxyadenosine + L-methionine + A + H(+). The protein operates within cofactor biosynthesis; molybdopterin biosynthesis. In terms of biological role, catalyzes the cyclization of GTP to (8S)-3',8-cyclo-7,8-dihydroguanosine 5'-triphosphate. This chain is GTP 3',8-cyclase, found in Staphylococcus aureus (strain USA300).